Reading from the N-terminus, the 265-residue chain is Undecaprenyl-diphosphatase (265 aa).

8 helical membrane passes run 1–21, 39–59, 83–103, 114–134, 144–164, 188–208, 218–238, and 244–264; these read MDWF…FLPI, QGLA…MMYY, LKLG…GFLG, ALVI…SDAF, LGVA…IPGT, SFLL…KDLI, MMAL…VFFI, and VGML…LFWL.

This sequence belongs to the UppP family.

It is found in the cell inner membrane. The catalysed reaction is di-trans,octa-cis-undecaprenyl diphosphate + H2O = di-trans,octa-cis-undecaprenyl phosphate + phosphate + H(+). Functionally, catalyzes the dephosphorylation of undecaprenyl diphosphate (UPP). Confers resistance to bacitracin. This chain is Undecaprenyl-diphosphatase, found in Alcanivorax borkumensis (strain ATCC 700651 / DSM 11573 / NCIMB 13689 / SK2).